Here is a 116-residue protein sequence, read N- to C-terminus: Ribosome-binding factor A (116 aa).

Belongs to the RbfA family. As to quaternary structure, monomer. Binds 30S ribosomal subunits, but not 50S ribosomal subunits or 70S ribosomes.

It localises to the cytoplasm. In terms of biological role, one of several proteins that assist in the late maturation steps of the functional core of the 30S ribosomal subunit. Associates with free 30S ribosomal subunits (but not with 30S subunits that are part of 70S ribosomes or polysomes). Required for efficient processing of 16S rRNA. May interact with the 5'-terminal helix region of 16S rRNA. The sequence is that of Ribosome-binding factor A from Malacoplasma penetrans (strain HF-2) (Mycoplasma penetrans).